The chain runs to 290 residues: Shikimate dehydrogenase (NADP(+)) (290 aa).

Shikimate contacts are provided by residues S19–S21 and S65. Catalysis depends on K69, which acts as the Proton acceptor. Residues N90 and D105 each contribute to the shikimate site. NADP(+) is bound by residues G129 to A133 and L231. Shikimate is bound at residue Y233. G254 serves as a coordination point for NADP(+).

The protein belongs to the shikimate dehydrogenase family. As to quaternary structure, homodimer.

The enzyme catalyses shikimate + NADP(+) = 3-dehydroshikimate + NADPH + H(+). It participates in metabolic intermediate biosynthesis; chorismate biosynthesis; chorismate from D-erythrose 4-phosphate and phosphoenolpyruvate: step 4/7. Functionally, involved in the biosynthesis of the chorismate, which leads to the biosynthesis of aromatic amino acids. Catalyzes the reversible NADPH linked reduction of 3-dehydroshikimate (DHSA) to yield shikimate (SA). The chain is Shikimate dehydrogenase (NADP(+)) from Latilactobacillus sakei subsp. sakei (strain 23K) (Lactobacillus sakei subsp. sakei).